Consider the following 74-residue polypeptide: Protein SMIM7 homolog (74 aa).

The chain crosses the membrane as a helical span at residues 53–73 (FRAFIGLWNIFIMFLMLVFFG).

Belongs to the SMIM7 family.

It is found in the membrane. The polypeptide is Protein SMIM7 homolog (Ixodes scapularis (Black-legged tick)).